We begin with the raw amino-acid sequence, 208 residues long: Thymidylate kinase (208 aa).

10–17 (GPDGSGKT) lines the ATP pocket.

Belongs to the thymidylate kinase family.

It catalyses the reaction dTMP + ATP = dTDP + ADP. Its function is as follows. Phosphorylation of dTMP to form dTDP in both de novo and salvage pathways of dTTP synthesis. The protein is Thymidylate kinase of Listeria monocytogenes serotype 4a (strain HCC23).